Here is a 173-residue protein sequence, read N- to C-terminus: Crossover junction endodeoxyribonuclease RuvC (173 aa).

Active-site residues include D8, E68, and D140. 3 residues coordinate Mg(2+): D8, E68, and D140.

This sequence belongs to the RuvC family. As to quaternary structure, homodimer which binds Holliday junction (HJ) DNA. The HJ becomes 2-fold symmetrical on binding to RuvC with unstacked arms; it has a different conformation from HJ DNA in complex with RuvA. In the full resolvosome a probable DNA-RuvA(4)-RuvB(12)-RuvC(2) complex forms which resolves the HJ. The cofactor is Mg(2+).

The protein localises to the cytoplasm. It carries out the reaction Endonucleolytic cleavage at a junction such as a reciprocal single-stranded crossover between two homologous DNA duplexes (Holliday junction).. Functionally, the RuvA-RuvB-RuvC complex processes Holliday junction (HJ) DNA during genetic recombination and DNA repair. Endonuclease that resolves HJ intermediates. Cleaves cruciform DNA by making single-stranded nicks across the HJ at symmetrical positions within the homologous arms, yielding a 5'-phosphate and a 3'-hydroxyl group; requires a central core of homology in the junction. The consensus cleavage sequence is 5'-(A/T)TT(C/G)-3'. Cleavage occurs on the 3'-side of the TT dinucleotide at the point of strand exchange. HJ branch migration catalyzed by RuvA-RuvB allows RuvC to scan DNA until it finds its consensus sequence, where it cleaves and resolves the cruciform DNA. The chain is Crossover junction endodeoxyribonuclease RuvC from Saccharophagus degradans (strain 2-40 / ATCC 43961 / DSM 17024).